Consider the following 395-residue polypeptide: Elongation factor Tu (395 aa).

The tr-type G domain occupies 10–204 (KPHVNIGTIG…TVDSYIPEPA (195 aa)). The interval 19–26 (GHVDHGKT) is G1. 19 to 26 (GHVDHGKT) provides a ligand contact to GTP. Thr26 serves as a coordination point for Mg(2+). The G2 stretch occupies residues 60-64 (GITIN). The G3 stretch occupies residues 81 to 84 (DAPG). GTP is bound by residues 81–85 (DAPGH) and 136–139 (NKTD). Residues 136 to 139 (NKTD) form a G4 region. The interval 174 to 176 (SAL) is G5.

It belongs to the TRAFAC class translation factor GTPase superfamily. Classic translation factor GTPase family. EF-Tu/EF-1A subfamily. In terms of assembly, monomer.

The protein resides in the cytoplasm. It catalyses the reaction GTP + H2O = GDP + phosphate + H(+). Its function is as follows. GTP hydrolase that promotes the GTP-dependent binding of aminoacyl-tRNA to the A-site of ribosomes during protein biosynthesis. This Leuconostoc mesenteroides subsp. mesenteroides (strain ATCC 8293 / DSM 20343 / BCRC 11652 / CCM 1803 / JCM 6124 / NCDO 523 / NBRC 100496 / NCIMB 8023 / NCTC 12954 / NRRL B-1118 / 37Y) protein is Elongation factor Tu.